A 465-amino-acid polypeptide reads, in one-letter code: Na(+)-translocating NADH-quinone reductase subunit A (465 aa).

Belongs to the NqrA family. Composed of six subunits; NqrA, NqrB, NqrC, NqrD, NqrE and NqrF.

The enzyme catalyses a ubiquinone + n Na(+)(in) + NADH + H(+) = a ubiquinol + n Na(+)(out) + NAD(+). In terms of biological role, NQR complex catalyzes the reduction of ubiquinone-1 to ubiquinol by two successive reactions, coupled with the transport of Na(+) ions from the cytoplasm to the periplasm. NqrA to NqrE are probably involved in the second step, the conversion of ubisemiquinone to ubiquinol. The chain is Na(+)-translocating NADH-quinone reductase subunit A from Chlamydia trachomatis serovar A (strain ATCC VR-571B / DSM 19440 / HAR-13).